A 384-amino-acid chain; its full sequence is 8-amino-7-oxononanoate synthase (384 aa).

A substrate-binding site is contributed by arginine 21. Residue 108-109 (GF) coordinates pyridoxal 5'-phosphate. Histidine 133 is a binding site for substrate. Residues serine 179, histidine 207, and threonine 233 each contribute to the pyridoxal 5'-phosphate site. Lysine 236 is modified (N6-(pyridoxal phosphate)lysine). Substrate is bound at residue threonine 352.

This sequence belongs to the class-II pyridoxal-phosphate-dependent aminotransferase family. BioF subfamily. As to quaternary structure, homodimer. Requires pyridoxal 5'-phosphate as cofactor.

The enzyme catalyses 6-carboxyhexanoyl-[ACP] + L-alanine + H(+) = (8S)-8-amino-7-oxononanoate + holo-[ACP] + CO2. The protein operates within cofactor biosynthesis; biotin biosynthesis. In terms of biological role, catalyzes the decarboxylative condensation of pimeloyl-[acyl-carrier protein] and L-alanine to produce 8-amino-7-oxononanoate (AON), [acyl-carrier protein], and carbon dioxide. The sequence is that of 8-amino-7-oxononanoate synthase from Shigella sonnei (strain Ss046).